A 640-amino-acid chain; its full sequence is Threonine--tRNA ligase (640 aa).

One can recognise a TGS domain in the interval 1–61 (MPTITLPDGS…THDATLQIIT (61 aa)). A catalytic region spans residues 242–533 (DHRKIGKQLD…LIEHYAGVFP (292 aa)). Residues cysteine 333, histidine 384, and histidine 510 each contribute to the Zn(2+) site.

Belongs to the class-II aminoacyl-tRNA synthetase family. In terms of assembly, homodimer. Zn(2+) is required as a cofactor.

Its subcellular location is the cytoplasm. It catalyses the reaction tRNA(Thr) + L-threonine + ATP = L-threonyl-tRNA(Thr) + AMP + diphosphate + H(+). In terms of biological role, catalyzes the attachment of threonine to tRNA(Thr) in a two-step reaction: L-threonine is first activated by ATP to form Thr-AMP and then transferred to the acceptor end of tRNA(Thr). Also edits incorrectly charged L-seryl-tRNA(Thr). This chain is Threonine--tRNA ligase, found in Pseudomonas putida (strain W619).